The following is a 154-amino-acid chain: Large-conductance mechanosensitive channel (154 aa).

Transmembrane regions (helical) follow at residues 14–34 (VVDL…VNSL) and 86–106 (VFIN…FFVV).

Belongs to the MscL family. Homopentamer.

The protein localises to the cell membrane. Its function is as follows. Channel that opens in response to stretch forces in the membrane lipid bilayer. May participate in the regulation of osmotic pressure changes within the cell. This chain is Large-conductance mechanosensitive channel, found in Dehalococcoides mccartyi (strain CBDB1).